The following is a 1375-amino-acid chain: DNA-directed RNA polymerase subunit beta (1375 aa).

It belongs to the RNA polymerase beta chain family. The RNAP catalytic core consists of 2 alpha, 1 beta, 1 beta' and 1 omega subunit. When a sigma factor is associated with the core the holoenzyme is formed, which can initiate transcription.

The catalysed reaction is RNA(n) + a ribonucleoside 5'-triphosphate = RNA(n+1) + diphosphate. In terms of biological role, DNA-dependent RNA polymerase catalyzes the transcription of DNA into RNA using the four ribonucleoside triphosphates as substrates. The protein is DNA-directed RNA polymerase subunit beta of Malacoplasma penetrans (strain HF-2) (Mycoplasma penetrans).